The following is a 338-amino-acid chain: Anthranilate phosphoribosyltransferase (338 aa).

5-phospho-alpha-D-ribose 1-diphosphate is bound by residues glycine 78, 81–82 (GD), serine 86, 88–91 (NIST), 106–114 (KHGNKSVTS), and serine 118. Glycine 78 provides a ligand contact to anthranilate. Serine 90 is a binding site for Mg(2+). Asparagine 109 contributes to the anthranilate binding site. Arginine 163 contributes to the anthranilate binding site. Residues aspartate 222 and glutamate 223 each contribute to the Mg(2+) site.

This sequence belongs to the anthranilate phosphoribosyltransferase family. As to quaternary structure, homodimer. Mg(2+) serves as cofactor.

The enzyme catalyses N-(5-phospho-beta-D-ribosyl)anthranilate + diphosphate = 5-phospho-alpha-D-ribose 1-diphosphate + anthranilate. It functions in the pathway amino-acid biosynthesis; L-tryptophan biosynthesis; L-tryptophan from chorismate: step 2/5. Functionally, catalyzes the transfer of the phosphoribosyl group of 5-phosphorylribose-1-pyrophosphate (PRPP) to anthranilate to yield N-(5'-phosphoribosyl)-anthranilate (PRA). The sequence is that of Anthranilate phosphoribosyltransferase from Staphylococcus saprophyticus subsp. saprophyticus (strain ATCC 15305 / DSM 20229 / NCIMB 8711 / NCTC 7292 / S-41).